The following is a 188-amino-acid chain: Josephin-2 (188 aa).

Residues 11-188 (PPTVYHERQR…EEKGSWLRTD (178 aa)) enclose the Josephin domain. The active-site Nucleophile is the cysteine 24. The Proton acceptor role is filled by histidine 125.

Its subcellular location is the cytoplasm. It is found in the cytosol. The enzyme catalyses Thiol-dependent hydrolysis of ester, thioester, amide, peptide and isopeptide bonds formed by the C-terminal Gly of ubiquitin (a 76-residue protein attached to proteins as an intracellular targeting signal).. In terms of biological role, cleaves 'Lys-63'-linked poly-ubiquitin chains, and with lesser efficiency 'Lys-48'-linked poly-ubiquitin chains (in vitro). May act as a deubiquitinating enzyme. This is Josephin-2 (JOSD2) from Homo sapiens (Human).